A 114-amino-acid chain; its full sequence is Ribonuclease P protein component (114 aa).

It belongs to the RnpA family. As to quaternary structure, consists of a catalytic RNA component (M1 or rnpB) and a protein subunit.

The catalysed reaction is Endonucleolytic cleavage of RNA, removing 5'-extranucleotides from tRNA precursor.. In terms of biological role, RNaseP catalyzes the removal of the 5'-leader sequence from pre-tRNA to produce the mature 5'-terminus. It can also cleave other RNA substrates such as 4.5S RNA. The protein component plays an auxiliary but essential role in vivo by binding to the 5'-leader sequence and broadening the substrate specificity of the ribozyme. This is Ribonuclease P protein component from Borrelia duttonii (strain Ly).